The primary structure comprises 159 residues: Galactose-specific lectin nattectin (159 aa).

A signal peptide spans 1-21 (MASVPHFTVFLFLACALGIGA). A propeptide spanning residues 22–24 (NVT) is cleaved from the precursor. Cystine bridges form between Cys31–Cys42, Cys59–Cys155, and Cys132–Cys147. The C-type lectin domain maps to 38-156 (HGSRCFTFHR…CKVKRSFLCA (119 aa)). Ca(2+)-binding residues include Gln122, Asp124, Glu130, and Asn143. Positions 122–124 (QPD) match the Galactose-binding motif.

As to quaternary structure, monomer. Not glycosylated. In terms of tissue distribution, expressed by the venom gland.

It localises to the secreted. In terms of biological role, galactose specific lectin that exhibits hemagglutination activity (minimum hemagluttination concentration = 2.5 ug/well) in a calcium-independent fashion. Has remarkable pro-inflammatory activity, inducing neutrophil mobilization in mice. Plays a crucial role in the innate immune system and chronic manifestations, especially in neutrophil mobilization. This chain is Galactose-specific lectin nattectin, found in Thalassophryne nattereri (Copper Joe toadfish).